The following is a 1123-amino-acid chain: uncharacterized protein (1123 aa).

8 disordered regions span residues 136-229 (LGES…PKLT), 262-471 (MLQY…LNQH), 483-514 (LSSIPINNKENNNNNNNRDNRDKDICTTSPNL), 527-609 (KKIN…QSDD), 629-769 (SILC…NNIS), 782-812 (LKPKPLHLSSPSIPTTSPDAPYRLPSLNSSS), 835-1005 (ITNN…GESN), and 1070-1099 (NNNNNNNNNNNNNNNNNNNNNNNNNNNNNI). The span at 166 to 185 (GGNGGNSGTNGDGDDGGCSL) shows a compositional bias: gly residues. Positions 190–199 (DENDYEDGMV) are enriched in acidic residues. Residues 211–223 (SGDGGGGGGGGGD) show a composition bias toward gly residues. The span at 262 to 322 (MLQYQQQQQQ…TTTTHSNNSN (61 aa)) shows a compositional bias: low complexity. Residues 329-343 (PLNNSNSNIHFLTNQ) are compositionally biased toward polar residues. Low complexity-rich tracts occupy residues 344–387 (QNSD…SNLN), 397–464 (STST…SSSS), 489–499 (NNKENNNNNNN), 527–548 (KKINSNNNNNNNNSNNNNNISS), and 563–585 (HQQQQQQQQQQQQQQQQHQQQHQ). A compositionally biased stretch (polar residues) spans 590-604 (SKSSSELQVPSSNYH). Residues 632–646 (CKDDSKTNTNKDKDN) are compositionally biased toward basic and acidic residues. Low complexity-rich tracts occupy residues 647-707 (NNSN…INNN) and 727-769 (SVSS…NNIS). Positions 790–799 (SSPSIPTTSP) are enriched in polar residues. Composition is skewed to low complexity over residues 835 to 984 (ITNN…NNNI) and 1070 to 1098 (NNNNNNNNNNNNNNNNNNNNNNNNNNNNN).

This is an uncharacterized protein from Dictyostelium discoideum (Social amoeba).